The following is an 809-amino-acid chain: Quinate/shikimate dehydrogenase (quinone) (809 aa).

5 helical membrane-spanning segments follow: residues 14–34 (VWCFILGLALLITGAFYVIGG), 41–61 (GGSWYFLIAGLMITTSAFFMF), 68–88 (VWLYALAFIGTVIWALIDAGF), 90–110 (FWPLHSRLMFPAGLFAAVMLT), and 127–147 (AYVIGGLTVLGMLGGLYGMFI).

It belongs to the bacterial PQQ dehydrogenase family. It depends on pyrroloquinoline quinone as a cofactor.

The protein resides in the cell membrane. The catalysed reaction is L-quinate + a quinone = 3-dehydroquinate + a quinol. It catalyses the reaction shikimate + a quinone = 3-dehydroshikimate + a quinol. It functions in the pathway aromatic compound metabolism; 3,4-dihydroxybenzoate biosynthesis; 3-dehydroquinate from D-quinate (PQQ route): step 1/1. In terms of biological role, can act either on quinate or on shikimate. The chain is Quinate/shikimate dehydrogenase (quinone) (quiA) from Acinetobacter baylyi (strain ATCC 33305 / BD413 / ADP1).